The chain runs to 330 residues: Aspartate--ammonia ligase (330 aa).

This sequence belongs to the class-II aminoacyl-tRNA synthetase family. AsnA subfamily.

The protein resides in the cytoplasm. The catalysed reaction is L-aspartate + NH4(+) + ATP = L-asparagine + AMP + diphosphate + H(+). It functions in the pathway amino-acid biosynthesis; L-asparagine biosynthesis; L-asparagine from L-aspartate (ammonia route): step 1/1. This Actinobacillus pleuropneumoniae serotype 7 (strain AP76) protein is Aspartate--ammonia ligase.